The primary structure comprises 645 residues: UvrABC system protein C (645 aa).

Positions 12-91 constitute a GIY-YIG domain; that stretch reads TGPGVYLYKN…IKQRKPRFNV (80 aa). In terms of domain architecture, UVR spans 202–237; sequence ADLERSLEVRMQEAAAAEQFELAAKYRDLLVTLHQL.

Belongs to the UvrC family. Interacts with UvrB in an incision complex.

It localises to the cytoplasm. Its function is as follows. The UvrABC repair system catalyzes the recognition and processing of DNA lesions. UvrC both incises the 5' and 3' sides of the lesion. The N-terminal half is responsible for the 3' incision and the C-terminal half is responsible for the 5' incision. This is UvrABC system protein C from Acidobacterium capsulatum (strain ATCC 51196 / DSM 11244 / BCRC 80197 / JCM 7670 / NBRC 15755 / NCIMB 13165 / 161).